A 248-amino-acid chain; its full sequence is Large ribosomal subunit protein uL30 (248 aa).

Met-1 is modified (N-acetylmethionine). Tandem repeats lie at residues 7-18 (KKKEVPAVPETL), 19-30 (KKKRRNFAELKI), 31-42 (KRLRKKFAQKML), and 43-54 (RKARRKLIYEKA). The segment at 7-54 (KKKEVPAVPETLKKKRRNFAELKIKRLRKKFAQKMLRKARRKLIYEKA) is 4 X 12 AA tandem repeats. Thr-17 carries the phosphothreonine modification. An N6-acetyllysine modification is found at Lys-124. Lys-127 carries the N6-succinyllysine modification. Tyr-139 carries the phosphotyrosine modification.

The protein belongs to the universal ribosomal protein uL30 family. In terms of assembly, component of the large ribosomal subunit. Homodimer. Interacts with DHX33.

The protein resides in the cytoplasm. Functionally, component of the large ribosomal subunit. The ribosome is a large ribonucleoprotein complex responsible for the synthesis of proteins in the cell. Binds to G-rich structures in 28S rRNA and in mRNAs. Plays a regulatory role in the translation apparatus; inhibits cell-free translation of mRNAs. This chain is Large ribosomal subunit protein uL30 (RPL7), found in Homo sapiens (Human).